The chain runs to 302 residues: Pyridoxal 5'-phosphate synthase subunit PdxS (302 aa).

A D-ribose 5-phosphate-binding site is contributed by Asp-32. Lys-89 (schiff-base intermediate with D-ribose 5-phosphate) is an active-site residue. D-ribose 5-phosphate is bound at residue Gly-161. A D-glyceraldehyde 3-phosphate-binding site is contributed by Arg-173. Residues Gly-222 and 243–244 (GS) contribute to the D-ribose 5-phosphate site. The interval 276–302 (ASNPGKGMKGEANADLSEGEKLQTRGV) is disordered. Over residues 293-302 (EGEKLQTRGV) the composition is skewed to basic and acidic residues.

Belongs to the PdxS/SNZ family. As to quaternary structure, in the presence of PdxT, forms a dodecamer of heterodimers.

It catalyses the reaction aldehydo-D-ribose 5-phosphate + D-glyceraldehyde 3-phosphate + L-glutamine = pyridoxal 5'-phosphate + L-glutamate + phosphate + 3 H2O + H(+). Its pathway is cofactor biosynthesis; pyridoxal 5'-phosphate biosynthesis. Catalyzes the formation of pyridoxal 5'-phosphate from ribose 5-phosphate (RBP), glyceraldehyde 3-phosphate (G3P) and ammonia. The ammonia is provided by the PdxT subunit. Can also use ribulose 5-phosphate and dihydroxyacetone phosphate as substrates, resulting from enzyme-catalyzed isomerization of RBP and G3P, respectively. In Haloquadratum walsbyi (strain DSM 16790 / HBSQ001), this protein is Pyridoxal 5'-phosphate synthase subunit PdxS.